The primary structure comprises 257 residues: Protein windbeutel (257 aa).

The signal sequence occupies residues 1–21; sequence MMHILVTLLLVAIHSIPTTWA. Residues 24-27 form a CXXC motif region; sequence CTGC. The short motif at 254 to 257 is the Prevents secretion from ER element; it reads KEEL.

As to quaternary structure, homodimer. Interacts with pip; the interaction is direct and does not require pip to be folded. In terms of tissue distribution, briefly expressed in the follicle cells of the ovary, at around the time when the dorsoventral axis of the egg chamber is first established.

It is found in the endoplasmic reticulum lumen. In terms of biological role, probable chaperone protein involved in dorsoventral axis patterning in early embryos. Probably acts by folding and targeting pipe (pip) into the Golgi. This chain is Protein windbeutel, found in Drosophila melanogaster (Fruit fly).